A 201-amino-acid polypeptide reads, in one-letter code: MVLFTLEDFAVFKATTLATRMHLIREQLDPKFAEAATVIVPLLQTDQQQAIYSHIAKHQRRYRNPPPNTWVAFSTSSRGYKMVPHLALGFWDDRLFLWLSVLRESKPASRVLTGITAMATTLPGKWQVAGEHTDKAMLPLTSANLATVGARFQTIKKAEFLLGKVYLADDPIWADPVRLWQDIQQRVVALKPMFDQLVQNV.

It belongs to the UPF0637 family.

This is UPF0637 protein LSEI_1198 from Lacticaseibacillus paracasei (strain ATCC 334 / BCRC 17002 / CCUG 31169 / CIP 107868 / KCTC 3260 / NRRL B-441) (Lactobacillus paracasei).